An 88-amino-acid chain; its full sequence is Small ribosomal subunit protein bS20 (88 aa).

The protein belongs to the bacterial ribosomal protein bS20 family.

Functionally, binds directly to 16S ribosomal RNA. The polypeptide is Small ribosomal subunit protein bS20 (Oenococcus oeni (strain ATCC BAA-331 / PSU-1)).